We begin with the raw amino-acid sequence, 571 residues long: Protein dead ringer homolog (571 aa).

Disordered regions lie at residues 45-117 (QHQQ…EPDK) and 190-229 (KRMQ…SCNG). Over residues 49 to 77 (RMMEQHKNDDVISNDVRCDDFSDGGERQR) the composition is skewed to basic and acidic residues. The segment covering 195 to 206 (DHNIQQSTNHIP) has biased composition (polar residues). Low complexity predominate over residues 207–224 (TPSSASSHTSSGSVTSQT). The ARID domain maps to 249–341 (DIKRKEFLDD…YLYPFECERE (93 aa)). Positions 459 to 471 (AAHHAAQQAAQHQ) are enriched in low complexity. The segment at 459 to 528 (AAHHAAQQAA…GDRGRHNEMS (70 aa)) is disordered. Positions 473–558 (SLKKEIDSDY…GVLFAHSPNH (86 aa)) constitute an REKLES domain. Composition is skewed to basic and acidic residues over residues 487–507 (PPEK…DNQR) and 518–527 (MGDRGRHNEM).

The protein localises to the nucleus. Transcription factor. The polypeptide is Protein dead ringer homolog (Ci-DRIL1/2) (Ciona intestinalis (Transparent sea squirt)).